Here is a 182-residue protein sequence, read N- to C-terminus: Isopentenyl-diphosphate Delta-isomerase (182 aa).

The Mn(2+) site is built by histidine 25 and histidine 32. Residues 30 to 164 (LLHLAFSSWL…PWAFSPWMVM (135 aa)) enclose the Nudix hydrolase domain. The active site involves cysteine 67. Histidine 69 contributes to the Mn(2+) binding site. Glutamate 87 is a binding site for Mg(2+). Mn(2+) is bound by residues glutamate 114 and glutamate 116. The active site involves glutamate 116.

This sequence belongs to the IPP isomerase type 1 family. Homodimer. Mg(2+) is required as a cofactor. Requires Mn(2+) as cofactor.

The protein resides in the cytoplasm. It catalyses the reaction isopentenyl diphosphate = dimethylallyl diphosphate. It participates in isoprenoid biosynthesis; dimethylallyl diphosphate biosynthesis; dimethylallyl diphosphate from isopentenyl diphosphate: step 1/1. In terms of biological role, catalyzes the 1,3-allylic rearrangement of the homoallylic substrate isopentenyl (IPP) to its highly electrophilic allylic isomer, dimethylallyl diphosphate (DMAPP). The sequence is that of Isopentenyl-diphosphate Delta-isomerase from Escherichia coli (strain SMS-3-5 / SECEC).